A 449-amino-acid polypeptide reads, in one-letter code: Xylose isomerase (449 aa).

Active-site residues include His101 and Asp104. Mg(2+)-binding residues include Glu232, Glu268, His271, Asp296, Asp307, Asp309, and Asp340.

It belongs to the xylose isomerase family. Homotetramer. Mg(2+) serves as cofactor.

It is found in the cytoplasm. It carries out the reaction alpha-D-xylose = alpha-D-xylulofuranose. This Bifidobacterium longum (strain NCC 2705) protein is Xylose isomerase.